Reading from the N-terminus, the 78-residue chain is Translational regulator CsrA (78 aa).

Belongs to the CsrA/RsmA family. As to quaternary structure, homodimer; the beta-strands of each monomer intercalate to form a hydrophobic core, while the alpha-helices form wings that extend away from the core.

The protein resides in the cytoplasm. Its function is as follows. A translational regulator that binds mRNA to regulate translation initiation and/or mRNA stability. Usually binds in the 5'-UTR at or near the Shine-Dalgarno sequence preventing ribosome-binding, thus repressing translation. Its main target seems to be the major flagellin gene, while its function is anatagonized by FliW. The sequence is that of Translational regulator CsrA from Borrelia hermsii (strain HS1 / DAH).